Consider the following 204-residue polypeptide: Copper-binding protein CutI (204 aa).

A signal peptide spans 1-26 (MLKKIALTLCPAIVGSLLFFTAPASA). Residues His-27 and Glu-50 each contribute to the Cu(2+) site. The Extracellular segment spans residues 27 to 178 (HVSVKPAESA…DDSENSGSSA (152 aa)). A disordered region spans residues 146–176 (PHSITNITSAKQVTDEHGATKTEDDSENSGS). The segment covering 147 to 157 (HSITNITSAKQ) has biased composition (polar residues). Residues 158–168 (VTDEHGATKTE) are compositionally biased toward basic and acidic residues. A helical transmembrane segment spans residues 179–199 (LDITAMVLSAAAIILSVAALV). Residues 200-204 (KKKRA) are Cytoplasmic-facing.

It is found in the cell membrane. In terms of biological role, copper-binding protein that probably plays a role in copper homeostasis. May act as metallochaperone, possibly to facilitate copper uptake via the CutJ/YcnJ importer. Preferentially binds Cu in its oxidized Cu(II) state in a 1:1 stoichiometry. This is Copper-binding protein CutI from Bacillus subtilis (strain 168).